A 386-amino-acid polypeptide reads, in one-letter code: DNA replication and repair protein RecF (386 aa).

Position 30–37 (30–37) interacts with ATP; the sequence is GANAQGKT.

This sequence belongs to the RecF family.

Its subcellular location is the cytoplasm. Functionally, the RecF protein is involved in DNA metabolism; it is required for DNA replication and normal SOS inducibility. RecF binds preferentially to single-stranded, linear DNA. It also seems to bind ATP. In Natranaerobius thermophilus (strain ATCC BAA-1301 / DSM 18059 / JW/NM-WN-LF), this protein is DNA replication and repair protein RecF.